The chain runs to 95 residues: Integration host factor subunit beta (95 aa).

A disordered region spans residues 56-76; the sequence is RAPRTGRNPKTGTSVELDGKY.

It belongs to the bacterial histone-like protein family. Heterodimer of an alpha and a beta chain.

Functionally, this protein is one of the two subunits of integration host factor, a specific DNA-binding protein that functions in genetic recombination as well as in transcriptional and translational control. This chain is Integration host factor subunit beta, found in Shewanella denitrificans (strain OS217 / ATCC BAA-1090 / DSM 15013).